We begin with the raw amino-acid sequence, 141 residues long: Cystatin (141 aa).

Positions 1–26 are cleaved as a signal peptide; the sequence is MVHSQLPVAAPLRLLCALLLLPSATM. The Cystatin domain maps to 29–129; sequence GGISPRSVTD…CHFQVWSRPW (101 aa). A Secondary area of contact motif is present at residues 73–77; the sequence is QVVAG. Cystine bridges form between Cys-91-Cys-107 and Cys-120-Cys-140.

Belongs to the cystatin family. In terms of tissue distribution, expressed by the venom gland at an extremely low level (at protein level).

The protein resides in the secreted. Its function is as follows. Inhibits various C1 cysteine proteases including cathepsin L, papain and cathepsin B. This protein has no toxic activity and its function in the venom is unknown. It may play a role as a housekeeping or regulatory protein. The polypeptide is Cystatin (Oxyuranus microlepidotus (Inland taipan)).